A 609-amino-acid chain; its full sequence is Myoneurin (609 aa).

The BTB domain maps to 24-89 (CDCTILIGDF…IYSGNLNYDS (66 aa)). 2 short sequence motifs (nuclear localization signal) span residues 172-188 (KKSQ…RSHQ) and 257-262 (QKPAKL). C2H2-type zinc fingers lie at residues 301 to 323 (PVCN…MRIH), 329 to 351 (YVCH…VRTH), 357 to 380 (YQCK…RMHH), 386 to 408 (YKCD…ARKH), 414 to 436 (YVCD…VRRH), 442 to 464 (YVCD…ARKH), 470 to 492 (YICG…FRSH), and 498 to 521 (FVCE…LKMH). The segment at 528–553 (IEMKSAENSSSSEDSTTKSPEPESLE) is disordered. Residues 533–546 (AENSSSSEDSTTKS) show a composition bias toward low complexity.

It localises to the nucleus. The polypeptide is Myoneurin (mynn) (Xenopus laevis (African clawed frog)).